The primary structure comprises 311 residues: Mas-related G-protein coupled receptor member E (311 aa).

The Extracellular segment spans residues 1-25; the sequence is MEPREAGQHAGAADGAQEDVAFNLV. The chain crosses the membrane as a helical span at residues 26–46; that stretch reads ILSLTEGLGLGGLLGNGAVLW. Over 47–63 the chain is Cytoplasmic; it reads LLSSNVYRNPFAIYLLD. Residues 64–84 form a helical membrane-spanning segment; it reads VACADLIFLGCHMVAIIPDLL. Residues 85–95 lie on the Extracellular side of the membrane; that stretch reads QGRLDFPGFVQ. A helical transmembrane segment spans residues 96–116; sequence TSLATLRFFCYIVGLSLLVAV. The Cytoplasmic segment spans residues 117 to 136; sequence SVEQCLAALFPAWYSCRRPR. Residues 137 to 157 traverse the membrane as a helical segment; it reads HLTTCVCALTWACCLLLHLLL. The Extracellular segment spans residues 158–177; the sequence is SGACTQFFGEPSRHLCRTLW. A helical transmembrane segment spans residues 178-198; sequence LVAAVLLAVLCCTMCGASLML. Residues 199–216 lie on the Cytoplasmic side of the membrane; the sequence is LLQVERGPQRPPPRGFPT. Residues 217 to 237 form a helical membrane-spanning segment; that stretch reads LILLAVLLFLFCGLPFGIYWL. At 238-251 the chain is on the extracellular side; it reads SRNLLWHIPHYFYH. Residues 252–272 form a helical membrane-spanning segment; that stretch reads FSFLTAAVYCAAKPVVYFCLG. The Cytoplasmic segment spans residues 273–311; sequence SAQGRRLPLRLVLQRALGDEAELGAVRETSRRGLVDIAA.

The protein belongs to the G-protein coupled receptor 1 family. Mas subfamily.

It is found in the cell membrane. In terms of biological role, orphan receptor. May regulate nociceptor function and/or development, including the sensation or modulation of pain. In Macaca fascicularis (Crab-eating macaque), this protein is Mas-related G-protein coupled receptor member E (MRGPRE).